Reading from the N-terminus, the 373-residue chain is Alanine dehydrogenase (373 aa).

Substrate-binding residues include arginine 15 and lysine 75. Histidine 96 (proton donor/acceptor) is an active-site residue. NAD(+)-binding positions include serine 134, isoleucine 178 to valine 179, aspartate 198, serine 220, valine 239 to leucine 240, valine 267 to aspartate 270, arginine 280, and valine 299 to isoleucine 302. Catalysis depends on aspartate 270, which acts as the Proton donor/acceptor.

This sequence belongs to the AlaDH/PNT family. Homohexamer. Trimer of dimer.

It localises to the cytoplasm. The catalysed reaction is L-alanine + NAD(+) + H2O = pyruvate + NH4(+) + NADH + H(+). It participates in amino-acid degradation; L-alanine degradation via dehydrogenase pathway; NH(3) and pyruvate from L-alanine: step 1/1. Catalyzes the reversible reductive amination of pyruvate to L-alanine. This enzyme is a key factor in the assimilation of L-alanine as an energy source through the tricarboxylic acid cycle. This chain is Alanine dehydrogenase, found in Methanococcus maripaludis (strain DSM 14266 / JCM 13030 / NBRC 101832 / S2 / LL).